A 171-amino-acid chain; its full sequence is Large ribosomal subunit protein bL17 (171 aa).

The segment covering 140-152 (KREIQTKAREEKR) has biased composition (basic and acidic residues). The segment at 140-171 (KREIQTKAREEKRATRKSNSAPVNKETTSKKK) is disordered. Residues 156–165 (KSNSAPVNKE) are compositionally biased toward polar residues.

This sequence belongs to the bacterial ribosomal protein bL17 family. In terms of assembly, part of the 50S ribosomal subunit. Contacts protein L32.

The polypeptide is Large ribosomal subunit protein bL17 (Leptospira interrogans serogroup Icterohaemorrhagiae serovar Lai (strain 56601)).